The primary structure comprises 134 residues: Large ribosomal subunit protein eL32 (134 aa).

The protein belongs to the eukaryotic ribosomal protein eL32 family.

This chain is Large ribosomal subunit protein eL32 (rpl32e), found in Picrophilus torridus (strain ATCC 700027 / DSM 9790 / JCM 10055 / NBRC 100828 / KAW 2/3).